The following is a 97-amino-acid chain: Large ribosomal subunit protein bL28 (97 aa).

It belongs to the bacterial ribosomal protein bL28 family.

The sequence is that of Large ribosomal subunit protein bL28 from Rickettsia typhi (strain ATCC VR-144 / Wilmington).